The chain runs to 212 residues: N-(5'-phosphoribosyl)anthranilate isomerase (212 aa).

This sequence belongs to the TrpF family.

The enzyme catalyses N-(5-phospho-beta-D-ribosyl)anthranilate = 1-(2-carboxyphenylamino)-1-deoxy-D-ribulose 5-phosphate. It functions in the pathway amino-acid biosynthesis; L-tryptophan biosynthesis; L-tryptophan from chorismate: step 3/5. In Myxococcus xanthus (strain DK1622), this protein is N-(5'-phosphoribosyl)anthranilate isomerase.